A 419-amino-acid polypeptide reads, in one-letter code: GTPase Obg (419 aa).

One can recognise an Obg domain in the interval 1-158 (MFVDQARIFV…KWIRLELKLL (158 aa)). The OBG-type G domain maps to 159-327 (ADVGLVGFPN…LMGKTYALLQ (169 aa)). GTP contacts are provided by residues 165–172 (GFPNAGKS), 190–194 (FTTLV), 212–215 (DIPG), 282–285 (NKMD), and 308–310 (SAV). Positions 172 and 192 each coordinate Mg(2+). The OCT domain maps to 342–419 (RRFEEELPFK…IKDFEFEFTE (78 aa)).

The protein belongs to the TRAFAC class OBG-HflX-like GTPase superfamily. OBG GTPase family. As to quaternary structure, monomer. The cofactor is Mg(2+).

The protein resides in the cytoplasm. Functionally, an essential GTPase which binds GTP, GDP and possibly (p)ppGpp with moderate affinity, with high nucleotide exchange rates and a fairly low GTP hydrolysis rate. Plays a role in control of the cell cycle, stress response, ribosome biogenesis and in those bacteria that undergo differentiation, in morphogenesis control. The protein is GTPase Obg of Syntrophomonas wolfei subsp. wolfei (strain DSM 2245B / Goettingen).